Consider the following 91-residue polypeptide: Small integral membrane protein 12 (91 aa).

A helical transmembrane segment spans residues 12-34 (YAPYVTFPVAFVVGAVGYHLEWF).

It belongs to the SMIM12 family.

Its subcellular location is the membrane. The sequence is that of Small integral membrane protein 12 (smim12) from Danio rerio (Zebrafish).